We begin with the raw amino-acid sequence, 413 residues long: Peptidase T (413 aa).

His-81 serves as a coordination point for Zn(2+). Asp-83 is a catalytic residue. A Zn(2+)-binding site is contributed by Asp-143. The active-site Proton acceptor is the Glu-178. 3 residues coordinate Zn(2+): Glu-179, Asp-201, and His-383.

It belongs to the peptidase M20B family. Homodimer. It depends on Zn(2+) as a cofactor.

Its subcellular location is the cytoplasm. The enzyme catalyses Release of the N-terminal residue from a tripeptide.. With respect to regulation, inhibited by EDTA, by the reducing agents dithiothreitol and 13-mercaptoethanol, and by the divalent cation Cu(2+). Functionally, cleaves the N-terminal amino acid of tripeptides. Has a broad specificity for tripeptides with no clear preference for a particular tripeptide. Tripeptides with proline in the second position are an exception and are not hydrolyzed. Does not hydrolyze dipeptides, tetrapeptides, or oligopeptides. This is Peptidase T (pepT) from Lactococcus lactis subsp. cremoris (Streptococcus cremoris).